We begin with the raw amino-acid sequence, 333 residues long: Diacylglycerol acyltransferase/mycolyltransferase Ag85C (333 aa).

The first 44 residues, 1–44 (MKFLQQMRKLFGLAAKFPARLTIAVIGTALLAGLVGVVGDTAIA), serve as a signal peptide directing secretion. 86-87 (LR) is a substrate binding site. The fibronectin-binding stretch occupies residues 102–112 (FEEYYHSGLSV). Residues Ser-170 and Asn-198 each contribute to the substrate site. Ser-170 functions as the Nucleophile in the catalytic mechanism. Residue Glu-274 is part of the active site. Substrate is bound by residues 276 to 279 (LTLS) and 306 to 308 (HSW). Residue His-306 is part of the active site.

This sequence belongs to the mycobacterial A85 antigen family. In terms of assembly, homodimer.

The protein resides in the secreted. It catalyses the reaction an acyl-CoA + a 1,2-diacyl-sn-glycerol = a triacyl-sn-glycerol + CoA. The catalysed reaction is 2 alpha,alpha'-trehalose 6-mycolate = alpha,alpha'-trehalose 6,6'-bismycolate + alpha,alpha-trehalose. The antigen 85 proteins (FbpA, FbpB, FbpC) are responsible for the high affinity of mycobacteria to fibronectin, a large adhesive glycoprotein, which facilitates the attachment of M.tuberculosis to murine alveolar macrophages (AMs). They also help to maintain the integrity of the cell wall by catalyzing the transfer of mycolic acids to cell wall arabinogalactan and through the synthesis of alpha,alpha-trehalose dimycolate (TDM, cord factor). They catalyze the transfer of a mycoloyl residue from one molecule of alpha,alpha-trehalose monomycolate (TMM) to another TMM, leading to the formation of TDM. This Mycobacterium leprae (strain TN) protein is Diacylglycerol acyltransferase/mycolyltransferase Ag85C (fbpC).